A 478-amino-acid polypeptide reads, in one-letter code: MKLKAKYKQQSKVGKVVQVVSAVVDVSFAGKDLPHILNALECTINNEKIVLEVLQHIGDDIVRCLAMNSTDGLFRGAEVIDTGEQIKVPVGKSILGRILNVVGQPIDDLGPIKCDNFSQIHKDAPKFINQSTSRKILITGIKVIDLLTPYISGGKIGLFGGAGVGKTVLIMEIINNVAKAYKGYTVFTGVGERTREGGDLYKEMVGSNIIDLNKLENSKVTLVFGQMNEPPGARARVALTGLTIAESFRDMNEGEVLLFIDNIFRFTQAGAEISTLLGRIPSAVGYQPTLATDIGSLQERITSTKFGAITSIQAIYVPADDLTDPAPVACFAHLDATTVLSRKIAELGIYPAVDPLNSSSQILDANVIGQEHYSVATQVQEILQTYKSLQDVIAILGVDELSDDEKRIVSRARKIQRFLTQPFHVAEVFTGKQGRFVSLEDTIYGFKGLIEGKYDDLPEMAFYMVGSIDEAIEKSKTL.

G160–T167 is an ATP binding site.

It belongs to the ATPase alpha/beta chains family. As to quaternary structure, F-type ATPases have 2 components, CF(1) - the catalytic core - and CF(0) - the membrane proton channel. CF(1) has five subunits: alpha(3), beta(3), gamma(1), delta(1), epsilon(1). CF(0) has three main subunits: a(1), b(2) and c(9-12). The alpha and beta chains form an alternating ring which encloses part of the gamma chain. CF(1) is attached to CF(0) by a central stalk formed by the gamma and epsilon chains, while a peripheral stalk is formed by the delta and b chains.

It localises to the cell inner membrane. It catalyses the reaction ATP + H2O + 4 H(+)(in) = ADP + phosphate + 5 H(+)(out). In terms of biological role, produces ATP from ADP in the presence of a proton gradient across the membrane. The catalytic sites are hosted primarily by the beta subunits. This Orientia tsutsugamushi (strain Boryong) (Rickettsia tsutsugamushi) protein is ATP synthase subunit beta.